A 110-amino-acid chain; its full sequence is Competence pilus inhibition repressor (110 aa).

The HTH cro/C1-type domain maps to 7–61 (VRFLRKRQGWTQQQLADFSHTSKSNISNLENGNQGYSPAILEYLAKAFNCSVSQI). The H-T-H motif DNA-binding region spans 18-37 (QQQLADFSHTSKSNISNLEN).

In terms of biological role, represses transcription of the PilB-specific inhibitory protein CpiA. This chain is Competence pilus inhibition repressor, found in Acinetobacter baylyi (strain ATCC 33305 / BD413 / ADP1).